A 182-amino-acid chain; its full sequence is Photosystem I assembly protein Ycf4 (182 aa).

The next 2 membrane-spanning stretches (helical) occupy residues 22-42 (WAIIIGSGGLGFLFTGLSSYL) and 66-86 (FYGILGIFFSLYLGLTILFSV).

Belongs to the Ycf4 family.

It localises to the plastid. The protein localises to the chloroplast thylakoid membrane. Functionally, seems to be required for the assembly of the photosystem I complex. This is Photosystem I assembly protein Ycf4 from Tupiella akineta (Green alga).